An 854-amino-acid polypeptide reads, in one-letter code: Translation initiation factor IF-2 (854 aa).

2 disordered regions span residues 52–79 (RQHG…RDGG) and 128–265 (RKQE…HGFQ). A compositionally biased stretch (polar residues) spans 61–75 (SQRITLQRKTTSTLS). Composition is skewed to basic and acidic residues over residues 128–150 (RKQE…RQEA) and 211–232 (VRHD…DNKR). Over residues 247-257 (RGKLGRKNKKP) the composition is skewed to basic residues. The tr-type G domain maps to 354-523 (KRAPVVTVMG…LLQAEVLELT (170 aa)). Residues 363-370 (GHVDHGKT) are G1. 363–370 (GHVDHGKT) is a GTP binding site. Positions 388-392 (GITQH) are G2. Positions 409–412 (DTPG) are G3. 409–413 (DTPGH) lines the GTP pocket. The G4 stretch occupies residues 463-466 (TKID). Positions 499-501 (SAK) are G5.

Belongs to the TRAFAC class translation factor GTPase superfamily. Classic translation factor GTPase family. IF-2 subfamily.

Its subcellular location is the cytoplasm. Its function is as follows. One of the essential components for the initiation of protein synthesis. Protects formylmethionyl-tRNA from spontaneous hydrolysis and promotes its binding to the 30S ribosomal subunits. Also involved in the hydrolysis of GTP during the formation of the 70S ribosomal complex. The polypeptide is Translation initiation factor IF-2 (Marinomonas sp. (strain MWYL1)).